The chain runs to 394 residues: MDSPRFPEETVLITGGGGYFGFRLGCALNQKGARVILFDITQPAQNLPEGIKFVCGDIRCLADVETAFQDAEKVACVFHVASYGMSGREQLNKTQIEEVNVGGTENILRACLERGVPRLVYTSTFNVIFGGQVIRNGDESLPYLPLHLHPDHYSRTKSIAEKKVLEANGLAFKQGDGILRTCAIRPAGIYGAGEQRHLPRIVSYIERGLFRFVYGDPQSLVEFVHVDNLAKAHILASEALKADKGHVASGQPYFISDGRPVNNFEFFRPLVEGLGYTFPSTRLPLTLIYCLAFLVEMTHFIVGRLYNFQPFLTRTEVYKTGVTHYFSLEKAKKELGFEPQPFDLQEVVEWFKAHGHGRGAAGQDSEFMLWDGILILLLALSVLTWILPSTTLSI.

Tyr-153 functions as the Proton acceptor in the catalytic mechanism. Lys-157 contacts NAD(+). A run of 2 helical transmembrane segments spans residues 283-303 (LPLTLIYCLAFLVEMTHFIVG) and 367-387 (FMLWDGILILLLALSVLTWIL).

Belongs to the 3-beta-HSD family.

The protein resides in the membrane. The protein is Short-chain dehydrogenase/reductase family 42E member 1 (Sdr42e1) of Mus musculus (Mouse).